The sequence spans 517 residues: Serine O-succinyltransferase (517 aa).

The transit peptide at 1 to 46 (MSPLNGVARSLPRPFQAVARRPFRVAQPAVACPSNRRSFNHSRSLR) directs the protein to the mitochondrion. Positions 34–66 (SNRRSFNHSRSLRSTGSQSPAPSPRDSSNPALS) are disordered. A compositionally biased stretch (polar residues) spans 45–64 (LRSTGSQSPAPSPRDSSNPA). The region spanning 134–386 (NVILLHTGLS…LTQQLATKKQ (253 aa)) is the AB hydrolase-1 domain. The segment at 141-144 (GLSA) is important for substrate specificity. The active-site Nucleophile is serine 238. Arginine 307 contributes to the substrate binding site. The tract at residues 413–436 (QPYQEQPSASTSAEQSASASETGS) is disordered. Over residues 416-436 (QEQPSASTSAEQSASASETGS) the composition is skewed to low complexity. Active-site residues include aspartate 461 and histidine 498. Aspartate 499 provides a ligand contact to substrate.

Belongs to the AB hydrolase superfamily. MetX family.

The protein localises to the mitochondrion. The catalysed reaction is succinyl-CoA + L-serine = O-succinyl-L-serine + CoA. Its pathway is amino-acid biosynthesis; L-cysteine biosynthesis; L-cysteine from L-serine: step 1/2. Functionally, transfers a succinyl group from succinyl-CoA to L-serine, forming succinyl-L-serine. Also has weak serine acetyl transferase activity and homoserine succinyl transferase activity. The sequence is that of Serine O-succinyltransferase from Emericella nidulans (Aspergillus nidulans).